Here is a 250-residue protein sequence, read N- to C-terminus: Adenosylcobinamide-GDP ribazoletransferase (250 aa).

6 helical membrane passes run 33 to 53 (IASY…LFYI), 63 to 83 (IVMT…HIDG), 109 to 129 (LGTN…LFLT), 137 to 157 (LTAL…SMMI), 180 to 200 (FAIA…LAVF), and 203 to 223 (ILTI…LRIG).

Belongs to the CobS family. Mg(2+) serves as cofactor.

Its subcellular location is the cell membrane. The enzyme catalyses alpha-ribazole + adenosylcob(III)inamide-GDP = adenosylcob(III)alamin + GMP + H(+). It carries out the reaction alpha-ribazole 5'-phosphate + adenosylcob(III)inamide-GDP = adenosylcob(III)alamin 5'-phosphate + GMP + H(+). Its pathway is cofactor biosynthesis; adenosylcobalamin biosynthesis; adenosylcobalamin from cob(II)yrinate a,c-diamide: step 7/7. In terms of biological role, joins adenosylcobinamide-GDP and alpha-ribazole to generate adenosylcobalamin (Ado-cobalamin). Also synthesizes adenosylcobalamin 5'-phosphate from adenosylcobinamide-GDP and alpha-ribazole 5'-phosphate. The protein is Adenosylcobinamide-GDP ribazoletransferase of Thermoanaerobacter sp. (strain X514).